Consider the following 307-residue polypeptide: Ribosomal protein L11 methyltransferase (307 aa).

S-adenosyl-L-methionine is bound by residues Thr162, Gly183, Asp205, and Asn244.

This sequence belongs to the methyltransferase superfamily. PrmA family.

It localises to the cytoplasm. It catalyses the reaction L-lysyl-[protein] + 3 S-adenosyl-L-methionine = N(6),N(6),N(6)-trimethyl-L-lysyl-[protein] + 3 S-adenosyl-L-homocysteine + 3 H(+). In terms of biological role, methylates ribosomal protein L11. In Bordetella parapertussis (strain 12822 / ATCC BAA-587 / NCTC 13253), this protein is Ribosomal protein L11 methyltransferase.